The chain runs to 130 residues: uncharacterized protein (130 aa).

Polar residues-rich tracts occupy residues 1-27 (MEIL…QPSQ) and 36-46 (QAENQETAKNG). Disordered regions lie at residues 1–46 (MEIL…AKNG) and 103–130 (VSAQ…ELDL). Positions 27-51 (QDAHEKARQQAENQETAKNGMISQI) form a coiled coil.

It belongs to the PDCD5 family.

This is an uncharacterized protein from Caenorhabditis elegans.